The chain runs to 333 residues: 5-formaminoimidazole-4-carboxamide-1-(beta)-D-ribofuranosyl 5'-monophosphate synthetase (333 aa).

5-amino-1-(5-phospho-beta-D-ribosyl)imidazole-4-carboxamide contacts are provided by His-21 and Ser-84. Residues 118–313 form the ATP-grasp domain; it reads MELLAAAGIP…YFDEPMDMGE (196 aa). ATP-binding positions include 141-187 and Glu-209; that span reads PVIV…VPAY. Asn-229 provides a ligand contact to 5-amino-1-(5-phospho-beta-D-ribosyl)imidazole-4-carboxamide. Residues Glu-268 and Glu-281 each contribute to the Mg(2+) site.

Belongs to the phosphohexose mutase family. Mg(2+) serves as cofactor. It depends on Mn(2+) as a cofactor.

It carries out the reaction 5-amino-1-(5-phospho-beta-D-ribosyl)imidazole-4-carboxamide + formate + ATP = 5-formamido-1-(5-phospho-D-ribosyl)imidazole-4-carboxamide + ADP + phosphate. It participates in purine metabolism; IMP biosynthesis via de novo pathway; 5-formamido-1-(5-phospho-D-ribosyl)imidazole-4-carboxamide from 5-amino-1-(5-phospho-D-ribosyl)imidazole-4-carboxamide (formate route): step 1/1. Functionally, catalyzes the ATP- and formate-dependent formylation of 5-aminoimidazole-4-carboxamide-1-beta-d-ribofuranosyl 5'-monophosphate (AICAR) to 5-formaminoimidazole-4-carboxamide-1-beta-d-ribofuranosyl 5'-monophosphate (FAICAR) in the absence of folates. The protein is 5-formaminoimidazole-4-carboxamide-1-(beta)-D-ribofuranosyl 5'-monophosphate synthetase of Pyrobaculum calidifontis (strain DSM 21063 / JCM 11548 / VA1).